Reading from the N-terminus, the 495-residue chain is METKPNPRRPSNTVLPYQTPRLRDHYLLGKKLGQGQFGTTYLCTEKSTSANYACKSIPKRKLVCREDYEDVWREIQIMHHLSEHPNVVRIKGTYEDSVFVHIVMEVCEGGELFDRIVSKGHFSEREAVKLIKTILGVVEACHSLGVMHRDLKPENFLFDSPKDDAKLKATDFGLSVFYKPGQYLYDVVGSPYYVAPEVLKKCYGPEIDVWSAGVILYILLSGVPPFWAETESGIFRQILQGKLDFKSDPWPTISEAAKDLIYKMLERSPKKRISAHEALCHPWIVDEQAAPDKPLDPAVLSRLKQFSQMNKIKKMALRVIAERLSEEEIGGLKELFKMIDTDNSGTITFEELKAGLKRVGSELMESEIKSLMDAADIDNSGTIDYGEFLAATLHMNKMEREENLVAAFSYFDKDGSGYITIDELQSACTEFGLCDTPLDDMIKEIDLDNDGKIDFSEFTAMMRKGDGVGRSRTMMKNLNFNIADAFGVDGEKSDD.

A Protein kinase domain is found at 26 to 284; that stretch reads YLLGKKLGQG…AHEALCHPWI (259 aa). ATP-binding positions include 32–40 and Lys-55; that span reads LGQGQFGTT. Asp-150 (proton acceptor) is an active-site residue. Residue Ser-190 is modified to Phosphoserine. The segment at 290–320 is autoinhibitory domain; sequence APDKPLDPAVLSRLKQFSQMNKIKKMALRVI. 4 consecutive EF-hand domains span residues 327-362, 363-398, 399-434, and 438-468; these read EEIGGLKELFKMIDTDNSGTITFEELKAGLKRVGSE, LMESEIKSLMDAADIDNSGTIDYGEFLAATLHMNKM, EREENLVAAFSYFDKDGSGYITIDELQSACTEFGLC, and LDDMIKEIDLDNDGKIDFSEFTAMMRKGDGV. Ca(2+) contacts are provided by Asp-340, Asp-342, Ser-344, Thr-346, Glu-351, Asp-376, Asp-378, Ser-380, Thr-382, Glu-387, Asp-412, Asp-414, Ser-416, Tyr-418, Glu-423, Asp-446, Asp-448, Asp-450, Lys-452, and Glu-457.

This sequence belongs to the protein kinase superfamily. Ser/Thr protein kinase family. CDPK subfamily. Interacts with Di19.

Its subcellular location is the cytoplasm. The protein localises to the nucleus. It catalyses the reaction L-seryl-[protein] + ATP = O-phospho-L-seryl-[protein] + ADP + H(+). The enzyme catalyses L-threonyl-[protein] + ATP = O-phospho-L-threonyl-[protein] + ADP + H(+). With respect to regulation, activated by calcium. Autophosphorylation may play an important role in the regulation of the kinase activity. In terms of biological role, may play a role in signal transduction pathways that involve calcium as a second messenger. Functions as a regulator of the calcium-mediated abscisic acid (ABA) signaling pathway. Phosphorylates ABA-responsive transcription factors ABF1 and ABF4 in vitro. This is Calcium-dependent protein kinase 11 (CPK11) from Arabidopsis thaliana (Mouse-ear cress).